The sequence spans 460 residues: ATP synthase subunit beta (460 aa).

150 to 157 (GGAGVGKT) serves as a coordination point for ATP.

It belongs to the ATPase alpha/beta chains family. As to quaternary structure, F-type ATPases have 2 components, CF(1) - the catalytic core - and CF(0) - the membrane proton channel. CF(1) has five subunits: alpha(3), beta(3), gamma(1), delta(1), epsilon(1). CF(0) has three main subunits: a(1), b(2) and c(9-12). The alpha and beta chains form an alternating ring which encloses part of the gamma chain. CF(1) is attached to CF(0) by a central stalk formed by the gamma and epsilon chains, while a peripheral stalk is formed by the delta and b chains.

Its subcellular location is the cell inner membrane. It catalyses the reaction ATP + H2O + 4 H(+)(in) = ADP + phosphate + 5 H(+)(out). Its function is as follows. Produces ATP from ADP in the presence of a proton gradient across the membrane. The catalytic sites are hosted primarily by the beta subunits. The protein is ATP synthase subunit beta of Serratia proteamaculans (strain 568).